Consider the following 302-residue polypeptide: Hydra actinoporin-like toxin 4 (302 aa).

The signal sequence occupies residues 1-17 (MLLFKLIVCFFFIFAIG). The disordered stretch occupies residues 22 to 93 (KKDETSGENE…PAPKQTTTKK (72 aa)). The segment covering 60–75 (KPPAAKPPAASKITKP) has biased composition (low complexity). A compositionally biased stretch (pro residues) spans 76 to 86 (QVPPQKKPPAP). A Cell attachment site motif is present at residues 274 to 276 (KAG).

This sequence belongs to the actinoporin family. HALT subfamily. As to quaternary structure, octamer or nonamer in membranes. Monomer in the soluble state. In vitro, interacts with folate receptor alpha (of target organism).

The protein resides in the nematocyst. It is found in the secreted. It localises to the target cell membrane. Functionally, pore-forming protein that forms hydrophilic pores and causes cytolysis. Compared to equinatoxin-2 (AC P61914), it reveals lower cytolysis activity (5-12-fold difference, tested on erythrocytes), a larger pore size (probably 2-3 nm) and different affinity to membrane lipids (100-fold lower affinity to sphingomyelin). Binds to sulfatides. Shows cytolytic activity on HeLa cells, with a different potency than its paralogs (from most potent to less potent: HALT-4&gt;HALT-6~HALT-1&gt;HALT-3&gt;HALT-7&gt;HALT-2). This recombinant protein has the highest cytolytic activity compared to other rHALT proteins, probably due to its longer N-terminal sequence that may penetrate the lipid bilayer more effectively. Pore formation is a multi-step process that involves specific recognition of membrane lipid by a protein aromatic residues rich region, firm binding to the membrane (mainly driven by hydrophobic interactions) accompanied by the transfer of the N-terminal region to the lipid-water interface and finally pore formation after oligomerization of monomers. In vitro, binds to the folate receptor alpha (FOLR1), a GPI-anchored membrane protein that plays a major role in the uptake of folate/folic acid into cells via endocytosis, suggesting a possible involvement of this receptor in the mechanism of HALT-1-induced cell lysis. In vivo, does not cause visible paralysis in larvae of the blowfly Sarcophaga faculata, the most common arthropod prey of Hydra. The sequence is that of Hydra actinoporin-like toxin 4 from Hydra vulgaris (Hydra).